The chain runs to 457 residues: MSKRYAVVLAAGQGTRMKSKLYKVLHPVCGKPMVEHVVDQISTLNVDKVVTIVGHGAEKVQEHLAGKSEFVKQEEQLGTAHAVLQAKAELAGKDGVTLVVCGDTPLIEASTMEALLKYHHEKRAKATILTTVIEDPTGYGRIIRDDLGIVEKIVEHKDATEKEQRISEINTGTYCFDNKALFEALENVSNDNVQGEYYLPDVIKILKDSDEVVAAYRMESFEESLGVNDRIALAEASRLMQRRINENHMRNGVTLVNPENTYIDIDVKIGQDTVIEPGVMLRGETVIGDDCVVTSGSEIVNSVIGERVHVKTSSIFESKVGDDVQIGPYAHLRPESDIHDHVKIGNYVETKKAVVGEGTKLPHFIYMGDAEIGKNVNVGCGSIAVNYDGKNKAKTIIGDNVFVGCNSNLIAPVKVGDRAFIAAGSTITKDVPDDALGIARAKQDNKLGYAKHLNHGK.

A pyrophosphorylase region spans residues 1-230 (MSKRYAVVLA…FEESLGVNDR (230 aa)). UDP-N-acetyl-alpha-D-glucosamine contacts are provided by residues 9–12 (LAAG), lysine 23, glutamine 73, and 78–79 (GT). Aspartate 103 contacts Mg(2+). UDP-N-acetyl-alpha-D-glucosamine-binding residues include glycine 140, glutamate 155, asparagine 170, and asparagine 228. Residue asparagine 228 coordinates Mg(2+). The linker stretch occupies residues 231–251 (IALAEASRLMQRRINENHMRN). Positions 252 to 457 (GVTLVNPENT…GYAKHLNHGK (206 aa)) are N-acetyltransferase. Residues arginine 333 and lysine 351 each contribute to the UDP-N-acetyl-alpha-D-glucosamine site. Histidine 363 acts as the Proton acceptor in catalysis. UDP-N-acetyl-alpha-D-glucosamine is bound by residues tyrosine 366 and asparagine 377. Acetyl-CoA is bound by residues 386 to 387 (NY), alanine 423, and arginine 440.

In the N-terminal section; belongs to the N-acetylglucosamine-1-phosphate uridyltransferase family. This sequence in the C-terminal section; belongs to the transferase hexapeptide repeat family. Homotrimer. It depends on Mg(2+) as a cofactor.

It is found in the cytoplasm. It catalyses the reaction alpha-D-glucosamine 1-phosphate + acetyl-CoA = N-acetyl-alpha-D-glucosamine 1-phosphate + CoA + H(+). The enzyme catalyses N-acetyl-alpha-D-glucosamine 1-phosphate + UTP + H(+) = UDP-N-acetyl-alpha-D-glucosamine + diphosphate. It functions in the pathway nucleotide-sugar biosynthesis; UDP-N-acetyl-alpha-D-glucosamine biosynthesis; N-acetyl-alpha-D-glucosamine 1-phosphate from alpha-D-glucosamine 6-phosphate (route II): step 2/2. The protein operates within nucleotide-sugar biosynthesis; UDP-N-acetyl-alpha-D-glucosamine biosynthesis; UDP-N-acetyl-alpha-D-glucosamine from N-acetyl-alpha-D-glucosamine 1-phosphate: step 1/1. Its pathway is bacterial outer membrane biogenesis; LPS lipid A biosynthesis. In terms of biological role, catalyzes the last two sequential reactions in the de novo biosynthetic pathway for UDP-N-acetylglucosamine (UDP-GlcNAc). The C-terminal domain catalyzes the transfer of acetyl group from acetyl coenzyme A to glucosamine-1-phosphate (GlcN-1-P) to produce N-acetylglucosamine-1-phosphate (GlcNAc-1-P), which is converted into UDP-GlcNAc by the transfer of uridine 5-monophosphate (from uridine 5-triphosphate), a reaction catalyzed by the N-terminal domain. The protein is Bifunctional protein GlmU of Listeria monocytogenes serotype 4b (strain CLIP80459).